Here is a 337-residue protein sequence, read N- to C-terminus: Perakine reductase (337 aa).

The Proton donor role is filled by tyrosine 57. Position 126 (histidine 126) interacts with substrate. An NADP(+)-binding site is contributed by 205 to 214; sequence SPIGRGLFAG.

It belongs to the aldo/keto reductase family.

It catalyses the reaction raucaffrinoline + NADP(+) = perakine + NADPH + H(+). In terms of biological role, aldo-keto reductase involved in the biosynthesis of monoterpenoid indole alkaloids. Broad substrate specificity enzyme with a high selectivity in the group of alkaloids. Can use perakine, 19(S),20(R)-dihydro-peraksine-17,21-al, cinnamic aldehyde, p-coumaric aldehyde and 3-(3,4,5-trimethoxyphenyl)propanal as substrates, but not ketosteroids such as progesterone. NADPH could not be replaced by NADH. The sequence is that of Perakine reductase (PR) from Rauvolfia serpentina (Serpentine wood).